Consider the following 444-residue polypeptide: MAPDPVAAETAAQGPTPRYFTWDEVAQRSGCEERWLVIDRKVYNISEFTRRHPGGSRVISHYAGQDATDPFVAFHINKGLVKKYMNSLLIGELSPEQPSFEPTKNKELTDEFRELRATVERMGLMKANHVFFLLYLLHILLLDGAAWLTLWVFGTSFLPFLLCAVLLSAVQAQAGWLQHDFGHLSVFSTSKWNHLLHHFVIGHLKGAPASWWNHMHFQHHAKPNCFRKDPDINMHPFFFALGKILSVELGKQKKKYMPYNHQHKYFFLIGPPALLPLYFQWYIFYFVIQRKKWVDLAWMITFYVRFFLTYVPLLGLKAFLGLFFIVRFLESNWFVWVTQMNHIPMHIDHDRNMDWVSTQLQATCNVHKSAFNDWFSGHLNFQIEHHLFPTMPRHNYHKVAPLVQSLCAKHGIEYQSKPLLSAFADIIHSLKESGQLWLDAYLHQ.

An N-acetylmethionine modification is found at M1. Residues 1–121 (MAPDPVAAET…FRELRATVER (121 aa)) are Cytoplasmic-facing. The 78-residue stretch at 17–94 (PRYFTWDEVA…MNSLLIGELS (78 aa)) folds into the Cytochrome b5 heme-binding domain. The helical transmembrane segment at 122–142 (MGLMKANHVFFLLYLLHILLL) threads the bilayer. Topologically, residues 143–145 (DGA) are lumenal. Residues 146 to 170 (AWLTLWVFGTSFLPFLLCAVLLSAV) traverse the membrane as a helical segment. Residues 171-267 (QAQAGWLQHD…PYNHQHKYFF (97 aa)) lie on the Cytoplasmic side of the membrane. Positions 179 to 183 (HDFGH) match the Histidine box-1 motif. The short motif at 216-220 (HFQHH) is the Histidine box-2 element. Residues 268–288 (LIGPPALLPLYFQWYIFYFVI) form a helical membrane-spanning segment. The Lumenal portion of the chain corresponds to 289-305 (QRKKWVDLAWMITFYVR). Residues 306–326 (FFLTYVPLLGLKAFLGLFFIV) traverse the membrane as a helical segment. Topologically, residues 327-444 (RFLESNWFVW…QLWLDAYLHQ (118 aa)) are cytoplasmic. Positions 382-386 (QIEHH) match the Histidine box-3 motif.

It belongs to the fatty acid desaturase type 1 family. Widely expressed, with highest levels in liver, brain, adrenal gland and heart. Highly expressed in fetal liver and brain.

The protein resides in the endoplasmic reticulum membrane. The protein localises to the mitochondrion. The catalysed reaction is (8Z,11Z,14Z)-eicosatrienoyl-CoA + 2 Fe(II)-[cytochrome b5] + O2 + 2 H(+) = (5Z,8Z,11Z,14Z)-eicosatetraenoyl-CoA + 2 Fe(III)-[cytochrome b5] + 2 H2O. The enzyme catalyses (8Z,11Z,14Z,17Z)-eicosatetraenoyl-CoA + 2 Fe(II)-[cytochrome b5] + O2 + 2 H(+) = (5Z,8Z,11Z,14Z,17Z)-eicosapentaenoyl-CoA + 2 Fe(III)-[cytochrome b5] + 2 H2O. It catalyses the reaction (11E)-octadecenoyl-CoA + 2 Fe(II)-[cytochrome b5] + O2 + 2 H(+) = (5Z,11E)-octadecadienoyl-CoA + 2 Fe(III)-[cytochrome b5] + 2 H2O. It functions in the pathway lipid metabolism; polyunsaturated fatty acid biosynthesis. In terms of biological role, acts as a front-end fatty acyl-coenzyme A (CoA) desaturase that introduces a cis double bond at carbon 5 located between a preexisting double bond and the carboxyl end of the fatty acyl chain. Involved in biosynthesis of highly unsaturated fatty acids (HUFA) from the essential polyunsaturated fatty acids (PUFA) linoleic acid (LA) (18:2n-6) and alpha-linolenic acid (ALA) (18:3n-3) precursors. Specifically, desaturates dihomo-gamma-linoleoate (DGLA) (20:3n-6) and eicosatetraenoate (ETA) (20:4n-3) to generate arachidonate (AA) (20:4n-6) and eicosapentaenoate (EPA) (20:5n-3), respectively. As a rate limiting enzyme for DGLA (20:3n-6) and AA (20:4n-6)-derived eicosanoid biosynthesis, controls the metabolism of inflammatory lipids like prostaglandin E2, critical for efficient acute inflammatory response and maintenance of epithelium homeostasis. Contributes to membrane phospholipid biosynthesis by providing AA (20:4n-6) as a major acyl chain esterified into phospholipids. In particular, regulates phosphatidylinositol-4,5-bisphosphate levels, modulating inflammatory cytokine production in T-cells. Also desaturates (11E)-octadecenoate (trans-vaccenoate)(18:1n-9), a metabolite in the biohydrogenation pathway of LA (18:2n-6). Does not exhibit any catalytic activity toward 20:3n-6, but it may enhance FADS2 activity. The protein is Acyl-CoA (8-3)-desaturase of Homo sapiens (Human).